The following is a 157-amino-acid chain: Large ribosomal subunit protein uL15 (157 aa).

Positions M1–S40 are disordered. Over residues R21 to I35 the composition is skewed to gly residues.

This sequence belongs to the universal ribosomal protein uL15 family. In terms of assembly, part of the 50S ribosomal subunit.

Its function is as follows. Binds to the 23S rRNA. The polypeptide is Large ribosomal subunit protein uL15 (Ruegeria pomeroyi (strain ATCC 700808 / DSM 15171 / DSS-3) (Silicibacter pomeroyi)).